A 271-amino-acid polypeptide reads, in one-letter code: Elongation factor Ts (271 aa).

The tract at residues 76 to 79 (TDFV) is involved in Mg(2+) ion dislocation from EF-Tu.

The protein belongs to the EF-Ts family.

The protein localises to the cytoplasm. Functionally, associates with the EF-Tu.GDP complex and induces the exchange of GDP to GTP. It remains bound to the aminoacyl-tRNA.EF-Tu.GTP complex up to the GTP hydrolysis stage on the ribosome. The chain is Elongation factor Ts from Mycobacterium tuberculosis (strain ATCC 25177 / H37Ra).